The primary structure comprises 631 residues: Putative meiotic phospholipase SPO1 (631 aa).

A signal peptide spans 1–17; sequence MQKLLFVFSVLLTVVLA. The segment at 24-67 is required for lipid-binding and function in meiosis; sequence QCPSSPLIREAKHELCPEETLYLKKKKIKTKNKLIQFLKSLTEA. Positions 24–631 constitute a PLA2c domain; that stretch reads QCPSSPLIRE…LQCFKDYCYS (608 aa). Asparagine 233, asparagine 293, and asparagine 303 each carry an N-linked (GlcNAc...) asparagine glycan. The chain crosses the membrane as a helical span at residues 376-396; the sequence is FITATSSSIFNNVLIFIWNLA. N-linked (GlcNAc...) asparagine glycosylation is found at asparagine 500, asparagine 536, asparagine 560, asparagine 563, and asparagine 572.

The protein belongs to the lysophospholipase family. Interacts with SPO23. Post-translationally, glycosylated.

It localises to the endoplasmic reticulum membrane. It is found in the nucleus membrane. Functionally, regulates spindle pole duplication in meiosis I, but not in mitosis. Required for meiosis I, meiosis II chromosome segregation and spore formation. Binds phosphatidylinositol (4)P mono- and polyphosphates. This chain is Putative meiotic phospholipase SPO1 (SPO1), found in Saccharomyces cerevisiae (strain ATCC 204508 / S288c) (Baker's yeast).